The primary structure comprises 243 residues: Small ribosomal subunit protein uS3 (243 aa).

Position 2 is an N-acetylalanine (Ala2). Residues Ser6 and Ser35 each carry the phosphoserine modification. The region spanning 21–92 (LNEFLTRELA…SVELYAEKVA (72 aa)) is the KH type-2 domain. Thr42 carries the post-translational modification Phosphothreonine. Position 62 is an N6-acetyllysine (Lys62). Asymmetric dimethylarginine is present on residues Arg64, Arg65, and Arg67. Thr70 carries the phosphothreonine modification. Residue Lys90 forms a Glycyl lysine isopeptide (Lys-Gly) (interchain with G-Cter in ubiquitin) linkage. The residue at position 104 (Ser104) is a Phosphoserine. Lys132 carries the post-translational modification N6-succinyllysine. The tract at residues 200 to 243 (PKKPLPDHVSIVEPKDEILPTTPISEQKGGKPEPPAMPQPVPTA) is disordered. Lys202 is covalently cross-linked (Glycyl lysine isopeptide (Lys-Gly) (interchain with G-Cter in ubiquitin)). Ser209 bears the Phosphoserine mark. Lys214 is covalently cross-linked (Glycyl lysine isopeptide (Lys-Gly) (interchain with G-Cter in SUMO2); alternate). Residue Lys214 forms a Glycyl lysine isopeptide (Lys-Gly) (interchain with G-Cter in ubiquitin); alternate linkage. A phosphothreonine mark is found at Thr220 and Thr221. Ser224 carries the phosphoserine modification. Lys230 is covalently cross-linked (Glycyl lysine isopeptide (Lys-Gly) (interchain with G-Cter in SUMO2)). Positions 231–243 (PEPPAMPQPVPTA) are enriched in pro residues. Thr242 carries the phosphothreonine modification.

Belongs to the universal ribosomal protein uS3 family. Component of the 40S small ribosomal subunit. Identified in a IGF2BP1-dependent mRNP granule complex containing untranslated mRNAs. Interacts with HNRPD. Interacts with PRMT1; the interaction methylates RPS3. Interacts with SUMO1; the interaction sumoylates RPS3. Interacts with UBC9. Interacts with CDK1; the interaction phosphorylates RPS3. Interacts with PRKCD; the interaction phosphorylates RPS3. Interacts with PKB/AKT; the interaction phosphorylates RPS3. Interacts with E2F1; the interaction occurs in the absence of nerve growth factor and increases transcription of pro-apoptotic proteins BCL2L11/BIM and HRK/Dp5. Interacts with the base excision repair proteins APEX1 and OGG1; interaction with OGG1 increases OGG1 N-glycosylase activity. Interacts with UNG; the interaction increases the uracil excision activity of UNG1. Interacts with HSP90; the interaction prevents the ubiquitination and proteasome-dependent degradation of RPS3 and is suppressed by increased ROS levels. Interacts with TOM70; the interaction promotes translocation of RPS3 to the mitochondrion. Interacts (via N-terminus) with RELA (via N-terminus); the interaction enhances the DNA-binding activity of the NF-kappa-B p65-p50 complex. Interacts with NFKBIA; the interaction is direct and may bridge the interaction between RPS3 and RELA. Interacts with IKKB; the interaction phosphorylates RPS3 and enhances its translocation to the nucleus. Interacts (via KH domain) with MDM2 and TP53. Interacts with TRADD. Interacts with ASCC3. Identified in a HCV IRES-mediated translation complex, at least composed of EIF3C, IGF2BP1, RPS3 and HCV RNA-replicon. Interacts with CRY1. In terms of processing, methylation by PRMT1 is required for import into the nucleolus and for ribosome assembly. Post-translationally, sumoylation by SUMO1 enhances protein stability through increased resistance to proteolysis. Sumoylation occurs at one or more of the three consensus sites, Lys-18, Lys-214 and Lys-230. Phosphorylation at Thr-221 by CDK1 occurs mainly in G2/M phase. Phosphorylation by PRKCD occurs on a non-ribosomal-associated form which results in translocation of RPS3 to the nucleus and enhances its endonuclease activity. Phosphorylated on Ser-209 by IKKB in response to activation of the NF-kappa-B p65-p50 complex which enhances the association of RPS3 with importin-alpha and mediates the nuclear translocation of RPS3. Phosphorylation by MAPK is required for translocation to the nucleus following exposure of cells to DNA damaging agents such as hydrogen peroxide. Phosphorylation by PKB/AKT mediates RPS3 nuclear translocation, enhances RPS3 endonuclease activity and suppresses RPS3-induced neuronal apoptosis. In terms of processing, ubiquitinated; ubiquitination is prevented by interaction with HSP90 which stabilizes the protein. Monoubiquitinated at Lys-214 by RNF10 and ZNF598 when a ribosome has stalled during translation of poly(A) sequences, leading to preclude synthesis of a long poly-lysine tail and initiate the ribosome quality control (RQC) pathway to degrade the potentially detrimental aberrant nascent polypeptide. Deubiquitinated at Lys-214 by USP10, preventing degradation by the proteasome and promoting 40S ribosome subunit recycling following ribosome dissociation. Post-translationally, ufmylated by UFL1.

The protein resides in the cytoplasm. The protein localises to the nucleus. It is found in the nucleolus. Its subcellular location is the mitochondrion inner membrane. It localises to the cytoskeleton. The protein resides in the spindle. It carries out the reaction 2'-deoxyribonucleotide-(2'-deoxyribose 5'-phosphate)-2'-deoxyribonucleotide-DNA = a 3'-end 2'-deoxyribonucleotide-(2,3-dehydro-2,3-deoxyribose 5'-phosphate)-DNA + a 5'-end 5'-phospho-2'-deoxyribonucleoside-DNA + H(+). Endonuclease activity is inhibited by MgCl2 on apurinic/apyrimidinic DNA but not on UV-irradiated DNA. Functionally, component of the small ribosomal subunit. The ribosome is a large ribonucleoprotein complex responsible for the synthesis of proteins in the cell. Has endonuclease activity and plays a role in repair of damaged DNA. Cleaves phosphodiester bonds of DNAs containing altered bases with broad specificity and cleaves supercoiled DNA more efficiently than relaxed DNA. Displays high binding affinity for 7,8-dihydro-8-oxoguanine (8-oxoG), a common DNA lesion caused by reactive oxygen species (ROS). Has also been shown to bind with similar affinity to intact and damaged DNA. Stimulates the N-glycosylase activity of the base excision protein OGG1. Enhances the uracil excision activity of UNG1. Also stimulates the cleavage of the phosphodiester backbone by APEX1. When located in the mitochondrion, reduces cellular ROS levels and mitochondrial DNA damage. Has also been shown to negatively regulate DNA repair in cells exposed to hydrogen peroxide. Plays a role in regulating transcription as part of the NF-kappa-B p65-p50 complex where it binds to the RELA/p65 subunit, enhances binding of the complex to DNA and promotes transcription of target genes. Represses its own translation by binding to its cognate mRNA. Binds to and protects TP53/p53 from MDM2-mediated ubiquitination. Involved in spindle formation and chromosome movement during mitosis by regulating microtubule polymerization. Involved in induction of apoptosis through its role in activation of CASP8. Induces neuronal apoptosis by interacting with the E2F1 transcription factor and acting synergistically with it to up-regulate pro-apoptotic proteins BCL2L11/BIM and HRK/Dp5. Interacts with TRADD following exposure to UV radiation and induces apoptosis by caspase-dependent JNK activation. This chain is Small ribosomal subunit protein uS3 (RPS3), found in Oryctolagus cuniculus (Rabbit).